Here is a 103-residue protein sequence, read N- to C-terminus: Large ribosomal subunit protein bL21 (103 aa).

This sequence belongs to the bacterial ribosomal protein bL21 family. In terms of assembly, part of the 50S ribosomal subunit. Contacts protein L20.

This protein binds to 23S rRNA in the presence of protein L20. In Kineococcus radiotolerans (strain ATCC BAA-149 / DSM 14245 / SRS30216), this protein is Large ribosomal subunit protein bL21.